The chain runs to 32 residues: Phallacidin proprotein (32 aa).

Positions 1 to 10 (MSDINATRLP) are excised as a propeptide. The segment at residues 11–17 (AWLVDCP) is a cross-link (cyclopeptide (Ala-Pro)). A cross-link (2'-cysteinyl-6'-hydroxytryptophan sulfoxide (Trp-Cys)) is located at residues 12-16 (WLVDC). The propeptide occupies 18 to 32 (CVGDDINRLLTRGEK).

The protein belongs to the MSDIN fungal toxin family. Post-translationally, processed by the macrocyclase-peptidase enzyme POPB to yield a toxic cyclic heptapeptide. POPB first removes 10 residues from the N-terminus. Conformational trapping of the remaining peptide forces the enzyme to release this intermediate rather than proceed to macrocyclization. The enzyme rebinds the remaining peptide in a different conformation and catalyzes macrocyclization of the N-terminal 7 residues.

In terms of biological role, major toxin that belongs to the bicyclic heptapeptides called phallotoxins. Although structurally related to amatoxins, phallotoxins have a different mode of action, which is the stabilization of F-actin. Phallotoxins are poisonous when administered parenterally, but not orally because of poor absorption. The polypeptide is Phallacidin proprotein (Amanita pallidorosea).